The chain runs to 312 residues: MHQPVMLEETIAMLKPHAKGRYLDGTVGLGGHSFAILQSAGDGAELCGLDQDKKALAIAEMTLKPFKKRVHLVHTKYSSFPLILKALGWKLLDGALIDIGVSSLQLDNAERGFSFLYDGPLDMRMDQDANNNSLFEIVNKSRQEYLKDIISRYGEEPQANRIAKAIVQKRRTKPITTTKELADLIEQAYPAAWRAKSRHHPATKTFQAFRIVVNSELNELEKFLNMIMGWIAPGGRVAVISFHSLEDRIVKQYMKSWTRSCICPPYVPVCKCFHKPEAILITKKPIRPSEKEISENIRSRSAKLRVAEKVLL.

S-adenosyl-L-methionine is bound by residues 30-32, aspartate 50, phenylalanine 80, aspartate 98, and glutamine 105; that span reads GGH.

Belongs to the methyltransferase superfamily. RsmH family.

The protein localises to the cytoplasm. The catalysed reaction is cytidine(1402) in 16S rRNA + S-adenosyl-L-methionine = N(4)-methylcytidine(1402) in 16S rRNA + S-adenosyl-L-homocysteine + H(+). In terms of biological role, specifically methylates the N4 position of cytidine in position 1402 (C1402) of 16S rRNA. In Lawsonia intracellularis (strain PHE/MN1-00), this protein is Ribosomal RNA small subunit methyltransferase H.